Consider the following 88-residue polypeptide: LYR motif-containing protein 2 (88 aa).

The N-terminal 19 residues, 1–19 (MAVSRLPPAALSLKQFLQR), are a transit peptide targeting the mitochondrion.

Belongs to the complex I LYR family.

The protein localises to the mitochondrion. Its function is as follows. Involved in efficient integration of the N-module into mitochondrial respiratory chain complex I. The polypeptide is LYR motif-containing protein 2 (lyrm2) (Danio rerio (Zebrafish)).